The primary structure comprises 209 residues: Uracil phosphoribosyltransferase (209 aa).

Residues Arg79, Arg104, and 131–139 (DPMLATGGS) contribute to the 5-phospho-alpha-D-ribose 1-diphosphate site. Uracil contacts are provided by residues Ile194 and 199-201 (GDA). Asp200 lines the 5-phospho-alpha-D-ribose 1-diphosphate pocket.

It belongs to the UPRTase family. The cofactor is Mg(2+).

It catalyses the reaction UMP + diphosphate = 5-phospho-alpha-D-ribose 1-diphosphate + uracil. Its pathway is pyrimidine metabolism; UMP biosynthesis via salvage pathway; UMP from uracil: step 1/1. Allosterically activated by GTP. Catalyzes the conversion of uracil and 5-phospho-alpha-D-ribose 1-diphosphate (PRPP) to UMP and diphosphate. The sequence is that of Uracil phosphoribosyltransferase from Alkaliphilus metalliredigens (strain QYMF).